A 590-amino-acid chain; its full sequence is Transcription factor bHLH13 (590 aa).

Disordered stretches follow at residues 274 to 296 (LQHHQHHQQQQQQPPQQQQHRQF) and 385 to 439 (AASS…EAER). Residues 281-293 (QQQQQQPPQQQQH) show a composition bias toward low complexity. Basic residues predominate over residues 416 to 425 (RPRKRGRRPA). Residues 429-478 (AEALNHVEAERQRREKLNQRFYALRSVVPNISKMDKASLLGDAVSYINEL) form the bHLH domain.

As to quaternary structure, homodimer.

It is found in the nucleus. This is Transcription factor bHLH13 (BHLH13) from Arabidopsis thaliana (Mouse-ear cress).